Reading from the N-terminus, the 77-residue chain is Translation initiation factor IF-1, chloroplastic (77 aa).

Positions 1-71 (MKEQKWIHEG…TRGRIIYRLR (71 aa)) constitute an S1-like domain.

Belongs to the IF-1 family. Component of the 30S ribosomal translation pre-initiation complex which assembles on the 30S ribosome in the order IF-2 and IF-3, IF-1 and N-formylmethionyl-tRNA(fMet); mRNA recruitment can occur at any time during PIC assembly.

Its subcellular location is the plastid. It localises to the chloroplast. Its function is as follows. One of the essential components for the initiation of protein synthesis. Stabilizes the binding of IF-2 and IF-3 on the 30S subunit to which N-formylmethionyl-tRNA(fMet) subsequently binds. Helps modulate mRNA selection, yielding the 30S pre-initiation complex (PIC). Upon addition of the 50S ribosomal subunit IF-1, IF-2 and IF-3 are released leaving the mature 70S translation initiation complex. This Brexia madagascariensis protein is Translation initiation factor IF-1, chloroplastic.